A 181-amino-acid polypeptide reads, in one-letter code: Ninjurin-B (181 aa).

Basic and acidic residues predominate over residues 1–10; the sequence is MDSGEVKISL. Residues 1 to 72 form a disordered region; it reads MDSGEVKISL…SNKKCSSDLS (72 aa). Topologically, residues 1-115 are extracellular; the sequence is MDSGEVKISL…YNDKASTYIY (115 aa). Over residues 12 to 26 the composition is skewed to polar residues; it reads DSPSSGESFASTTSG. Residues 33-49 show a composition bias toward basic and acidic residues; sequence RDLDIQVHESHIKDDQF. The tract at residues 80–91 is helix alpha1; that stretch reads NKNVAEGLMDIA. Positions 94-110 are helix alpha2; it reads SANANQLRFLITYNDKA. Residues 116-136 form a helical membrane-spanning segment; sequence SMIMVILSLVLQLLVGIMLIF. Topologically, residues 137-153 are cytoplasmic; it reads KRRLKRFRNRSYERTND. The helical transmembrane segment at 154–174 threads the bilayer; sequence LLVMGVFMITVINILLAAFTT. Topologically, residues 175–181 are extracellular; sequence TDGGGSH.

Belongs to the ninjurin family.

The protein localises to the membrane. Effector of non-apoptotic necrotic cell death that mediates plasma membrane rupture (cytolysis): oligomerizes in response to death stimuli and promotes plasma membrane rupture by introducing hydrophilic faces of 2 alpha helices into the hydrophobic membrane, leading to release intracellular molecules that propagate the inflammatory response. Also acts as a homophilic transmembrane adhesion molecule that promotes cell adhesion by mediating homophilic interactions via its extracellular region. This chain is Ninjurin-B, found in Drosophila melanogaster (Fruit fly).